The chain runs to 226 residues: Transmembrane gamma-carboxyglutamic acid protein 4 (226 aa).

Positions Met-1–Ala-17 are cleaved as a signal peptide. Residues Val-18–Arg-49 constitute a propeptide that is removed on maturation. Topologically, residues Leu-50–Asp-113 are extracellular. Residues Asn-52–Ile-98 form the Gla domain. Cys-69 and Cys-74 are oxidised to a cystine. Glu-72 carries the post-translational modification 4-carboxyglutamate. Residues Val-114 to Val-134 traverse the membrane as a helical segment. Over Gly-135–His-226 the chain is Cytoplasmic. The residue at position 164 (Ser-164) is a Phosphoserine. An LPXY motif; mediates binding to WW domain-containing proteins motif is present at residues Leu-186–Tyr-189. Positions Pro-204–Tyr-207 match the PPXY motif; mediates binding to WW domain-containing proteins motif.

This sequence belongs to the commissureless family. Interacts (via cytoplasmic domain) with WW domain-containing proteins MAGI1, MAGI3, NEDD4, NEDD4L, WWTR1/TAZ and YAP1. In terms of processing, gamma-carboxyglutamate residues are formed by vitamin K dependent carboxylation. These residues are essential for the binding of calcium.

It is found in the endoplasmic reticulum-Golgi intermediate compartment membrane. The protein localises to the cell membrane. Its function is as follows. May control axon guidance across the CNS. Prevents the delivery of ROBO1 at the cell surface and down-regulates its expression. In Mus musculus (Mouse), this protein is Transmembrane gamma-carboxyglutamic acid protein 4 (Prrg4).